A 379-amino-acid chain; its full sequence is Ribosomal RNA large subunit methyltransferase G (379 aa).

Belongs to the methyltransferase superfamily. RlmG family.

The protein localises to the cytoplasm. The catalysed reaction is guanosine(1835) in 23S rRNA + S-adenosyl-L-methionine = N(2)-methylguanosine(1835) in 23S rRNA + S-adenosyl-L-homocysteine + H(+). Specifically methylates the guanine in position 1835 (m2G1835) of 23S rRNA. The chain is Ribosomal RNA large subunit methyltransferase G from Pectobacterium atrosepticum (strain SCRI 1043 / ATCC BAA-672) (Erwinia carotovora subsp. atroseptica).